A 201-amino-acid chain; its full sequence is Small ribosomal subunit protein uS4 (201 aa).

An S4 RNA-binding domain is found at 91 to 151 (SRLDNVVYRA…EKSQKMNWFE (61 aa)).

Belongs to the universal ribosomal protein uS4 family. Part of the 30S ribosomal subunit. Contacts protein S5. The interaction surface between S4 and S5 is involved in control of translational fidelity.

One of the primary rRNA binding proteins, it binds directly to 16S rRNA where it nucleates assembly of the body of the 30S subunit. In terms of biological role, with S5 and S12 plays an important role in translational accuracy. The chain is Small ribosomal subunit protein uS4 from Corynebacterium glutamicum (strain R).